The primary structure comprises 301 residues: Light-independent protochlorophyllide reductase iron-sulfur ATP-binding protein (301 aa).

Residues 1 to 26 (MSNGSVPVSGIGGRGDGEGSSQVHME) are disordered. ATP is bound by residues 44–49 (GIGKST) and Lys73. Ser48 provides a ligand contact to Mg(2+). Positions 129 and 163 each coordinate [4Fe-4S] cluster. 214–215 (NR) lines the ATP pocket.

This sequence belongs to the NifH/BchL/ChlL family. As to quaternary structure, homodimer. Protochlorophyllide reductase is composed of three subunits; BchL, BchN and BchB. It depends on [4Fe-4S] cluster as a cofactor.

The catalysed reaction is chlorophyllide a + oxidized 2[4Fe-4S]-[ferredoxin] + 2 ADP + 2 phosphate = protochlorophyllide a + reduced 2[4Fe-4S]-[ferredoxin] + 2 ATP + 2 H2O. It participates in porphyrin-containing compound metabolism; bacteriochlorophyll biosynthesis (light-independent). Component of the dark-operative protochlorophyllide reductase (DPOR) that uses Mg-ATP and reduced ferredoxin to reduce ring D of protochlorophyllide (Pchlide) to form chlorophyllide a (Chlide). This reaction is light-independent. The L component serves as a unique electron donor to the NB-component of the complex, and binds Mg-ATP. This Halorhodospira halophila (strain DSM 244 / SL1) (Ectothiorhodospira halophila (strain DSM 244 / SL1)) protein is Light-independent protochlorophyllide reductase iron-sulfur ATP-binding protein.